The primary structure comprises 217 residues: MCEKSQTIKELLNAIRTLVVKNNKAKVSMIEKELLAFVSELDKKFKQQLNNFNELQQKIPLLQKANEEFALKFERMQREAQNQIQAKLDELNLKNKKELEQAKKYAIAKTLDQPLNIIDQFEIALSYAQKDPQVKNYTTGFTMVLDAFSRWLEANGVTKIKIEPGMEFDEKIMSALELVDSNLAKNKVVRVSKSGYKLYDKVIRFASVFVSKGNKKS.

Belongs to the GrpE family. As to quaternary structure, homodimer.

Its subcellular location is the cytoplasm. Its function is as follows. Participates actively in the response to hyperosmotic and heat shock by preventing the aggregation of stress-denatured proteins, in association with DnaK and GrpE. It is the nucleotide exchange factor for DnaK and may function as a thermosensor. Unfolded proteins bind initially to DnaJ; upon interaction with the DnaJ-bound protein, DnaK hydrolyzes its bound ATP, resulting in the formation of a stable complex. GrpE releases ADP from DnaK; ATP binding to DnaK triggers the release of the substrate protein, thus completing the reaction cycle. Several rounds of ATP-dependent interactions between DnaJ, DnaK and GrpE are required for fully efficient folding. This is Protein GrpE from Mycoplasma genitalium (strain ATCC 33530 / DSM 19775 / NCTC 10195 / G37) (Mycoplasmoides genitalium).